The sequence spans 1109 residues: Protein argonaute 3 (1109 aa).

The span at 1–13 (MAGRGGRDPRRGY) shows a compositional bias: basic and acidic residues. Disordered regions lie at residues 1 to 83 (MAGR…GLVR) and 125 to 220 (DHRD…PLSK). 3 stretches are compositionally biased toward gly residues: residues 14–30 (DGGY…GGTN), 37–54 (RGGG…GGRG), and 62–83 (DVLG…GLVR). A compositionally biased stretch (basic and acidic residues) spans 125 to 134 (DHRDQHDHQS). The segment covering 135–161 (QRHHHRHHHHQRQRHHHHHQRQQRRGS) has biased composition (basic residues). The PAZ domain occupies 411-521 (SVLDLVKTMK…VPIEFCNIPE (111 aa)). The span at 527–545 (VARLDDKKSDNKGEQEKPS) shows a compositional bias: basic and acidic residues. Residues 527-548 (VARLDDKKSDNKGEQEKPSTKT) are disordered. The 304-residue stretch at 720 to 1023 (LLFCPMLNRC…AAYRGRLYYE (304 aa)) folds into the Piwi domain.

Belongs to the argonaute family. Ago subfamily.

In terms of biological role, probably involved in the RNA silencing pathway. May bind to short RNAs such as microRNAs (miRNAs) or short interfering RNAs (siRNAs), and represses the translation of mRNAs which are complementary to them. This chain is Protein argonaute 3 (AGO3), found in Oryza sativa subsp. japonica (Rice).